Here is a 640-residue protein sequence, read N- to C-terminus: Protein ALTERED PHOSPHATE STARVATION RESPONSE 1 (640 aa).

The disordered stretch occupies residues 60–175 (TPLHLHHNPP…ATPQASSVVS (116 aa)). Residues 68–87 (PPSPSPPPPPPPRPPPPPLS) are compositionally biased toward pro residues. Positions 88-103 (PGSETTTWTTTTTSSV) are enriched in low complexity. Residues 104–118 (LPPPPPPPPPPPPPS) show a composition bias toward pro residues. Low complexity predominate over residues 144-173 (TTATRTATGTGSDAAVTTAPTTATPQASSV). Positions 336–371 (KTEKAKKDVEKLESQLSVSSQAIQSASNEIIKLRET) form a coiled coil.

In terms of tissue distribution, expressed in the root tip of primary and lateral roots, specifically in the meristematic region, including the quiescent center and lateral root cap cells.

The protein localises to the nucleus. Required for the coordination of cell differentiation and cell elongation in the root tip. Required for the coordination of cell processes necessary for correct root growth in response to phosphate starvation, through the modulation of the auxin transporter protein PIN7. The sequence is that of Protein ALTERED PHOSPHATE STARVATION RESPONSE 1 from Arabidopsis thaliana (Mouse-ear cress).